Consider the following 196-residue polypeptide: ATP synthase subunit b 2 (196 aa).

Over residues 1–18 the composition is skewed to low complexity; that stretch reads MVVAQAGAPAHPPAAHGA. Residues 1 to 33 are disordered; sequence MVVAQAGAPAHPPAAHGAEAGHGEAAGGEHGGF. A helical transmembrane segment spans residues 41–60; that stretch reads FASQLIWLIVSFGALYFLMS.

It belongs to the ATPase B chain family. As to quaternary structure, F-type ATPases have 2 components, F(1) - the catalytic core - and F(0) - the membrane proton channel. F(1) has five subunits: alpha(3), beta(3), gamma(1), delta(1), epsilon(1). F(0) has three main subunits: a(1), b(2) and c(10-14). The alpha and beta chains form an alternating ring which encloses part of the gamma chain. F(1) is attached to F(0) by a central stalk formed by the gamma and epsilon chains, while a peripheral stalk is formed by the delta and b chains.

It localises to the cell inner membrane. Its function is as follows. F(1)F(0) ATP synthase produces ATP from ADP in the presence of a proton or sodium gradient. F-type ATPases consist of two structural domains, F(1) containing the extramembraneous catalytic core and F(0) containing the membrane proton channel, linked together by a central stalk and a peripheral stalk. During catalysis, ATP synthesis in the catalytic domain of F(1) is coupled via a rotary mechanism of the central stalk subunits to proton translocation. In terms of biological role, component of the F(0) channel, it forms part of the peripheral stalk, linking F(1) to F(0). The b'-subunit is a diverged and duplicated form of b found in plants and photosynthetic bacteria. This Azorhizobium caulinodans (strain ATCC 43989 / DSM 5975 / JCM 20966 / LMG 6465 / NBRC 14845 / NCIMB 13405 / ORS 571) protein is ATP synthase subunit b 2 (atpF2).